A 224-amino-acid chain; its full sequence is Transcription cofactor HES-6 (224 aa).

Positions 1–31 are disordered; it reads MAPSQAPSRDRAGQEDEDRWEARGDRKARKP. Residues 8 to 25 show a composition bias toward basic and acidic residues; sequence SRDRAGQEDEDRWEARGD. Residues 25–77 enclose the bHLH domain; sequence DRKARKPLVEKKRRARINESLQELRLLLAGTEVQAKLENAEVLELTVRRVQGA. The Orange domain occupies 96 to 129; sequence FAAGYIQCMHEVHTFVSTCQAIDATVSAELLNHL. The tract at residues 146–209 is disordered; it reads GDSLAGLPGG…GPDLVSTSLG (64 aa). Over residues 158–171 the composition is skewed to low complexity; that stretch reads RSSWPPGGSPESPL. Acidic residues predominate over residues 181 to 190; it reads LCSDLEEIPE. A WRPW motif motif is present at residues 221-224; sequence WRPW.

Transcription repression requires formation of a complex with a corepressor protein of the Groucho/TLE family. Interacts with HES1. In terms of tissue distribution, expressed in both undifferentiated and differentiated cells. High levels of expression are observed in several embryonic tissues including the nervous system, muscle and thymus. In the nervous system, initially expressed in the closing neural tube, then in the spinal cord, cranial and dorsal root ganglia, and brain neuroepithelium. Also expressed in epithelial cells of the embryonic respiratory, urinary and digestive systems. In the limb buds, expressed in skeletal muscle and presumptive tendons.

The protein resides in the nucleus. In terms of biological role, does not bind DNA itself but suppresses both HES1-mediated N box-dependent transcriptional repression and binding of HES1 to E box sequences. Also suppresses HES1-mediated inhibition of the heterodimer formed by ASCL1/MASH1 and TCF3/E47, allowing ASCL1 and TCF3 to up-regulate transcription in its presence. Promotes cell differentiation. This Mus musculus (Mouse) protein is Transcription cofactor HES-6.